The chain runs to 92 residues: Endoribonuclease VapD homolog (92 aa).

Belongs to the VapD ribonuclease family. In terms of assembly, homodimer.

Its function is as follows. Cleaves ssRNA, mostly between U:A. This is Endoribonuclease VapD homolog from Neisseria gonorrhoeae.